We begin with the raw amino-acid sequence, 249 residues long: tRNA (guanine-N(1)-)-methyltransferase (249 aa).

S-adenosyl-L-methionine is bound by residues Gly113 and 133–138; that span reads IGDFVV.

This sequence belongs to the RNA methyltransferase TrmD family. As to quaternary structure, homodimer.

Its subcellular location is the cytoplasm. The enzyme catalyses guanosine(37) in tRNA + S-adenosyl-L-methionine = N(1)-methylguanosine(37) in tRNA + S-adenosyl-L-homocysteine + H(+). Functionally, specifically methylates guanosine-37 in various tRNAs. The chain is tRNA (guanine-N(1)-)-methyltransferase from Neisseria gonorrhoeae (strain ATCC 700825 / FA 1090).